Consider the following 462-residue polypeptide: Tubulin alpha-4 chain (462 aa).

Positions 11, 82, 151, 155, 156, 190, 217, and 239 each coordinate GTP. Glutamate 82 is a binding site for Mg(2+). The active site involves glutamate 265.

This sequence belongs to the tubulin family. As to quaternary structure, dimer of alpha and beta chains. A typical microtubule is a hollow water-filled tube with an outer diameter of 25 nm and an inner diameter of 15 nM. Alpha-beta heterodimers associate head-to-tail to form protofilaments running lengthwise along the microtubule wall with the beta-tubulin subunit facing the microtubule plus end conferring a structural polarity. Microtubules usually have 13 protofilaments but different protofilament numbers can be found in some organisms and specialized cells. It depends on Mg(2+) as a cofactor.

It is found in the cytoplasm. The protein resides in the cytoskeleton. The enzyme catalyses GTP + H2O = GDP + phosphate + H(+). Its function is as follows. Tubulin is the major constituent of microtubules, a cylinder consisting of laterally associated linear protofilaments composed of alpha- and beta-tubulin heterodimers. Microtubules grow by the addition of GTP-tubulin dimers to the microtubule end, where a stabilizing cap forms. Below the cap, tubulin dimers are in GDP-bound state, owing to GTPase activity of alpha-tubulin. In Drosophila melanogaster (Fruit fly), this protein is Tubulin alpha-4 chain (alphaTub67C).